A 330-amino-acid chain; its full sequence is Protein rlx (330 aa).

The tract at residues 220–330 is disordered; the sequence is LGEDYDKGGL…EKTRGFDLEL (111 aa). 2 stretches are compositionally biased toward basic and acidic residues: residues 237–269 and 279–330; these read NEQREEQARQRELEQARREKIKRDKEREKEWAR and QNRE…DLEL.

Functionally, this protein is probably required for relaxation complex formation and plasmid mobilization by conjugative plasmids. The polypeptide is Protein rlx (rlx) (Staphylococcus aureus).